The sequence spans 150 residues: Transcriptional repressor NrdR (150 aa).

A zinc finger lies at 3-34; it reads CPFCGYEDTFVIDTREIEDQKVIRRRRECPNC. The ATP-cone domain maps to 49 to 139; the sequence is IMVIKKDGRR…VYQEFSSLEE (91 aa).

The protein belongs to the NrdR family. It depends on Zn(2+) as a cofactor.

Functionally, negatively regulates transcription of bacterial ribonucleotide reductase nrd genes and operons by binding to NrdR-boxes. This Dictyoglomus turgidum (strain DSM 6724 / Z-1310) protein is Transcriptional repressor NrdR.